The following is a 310-amino-acid chain: GMP synthase [glutamine-hydrolyzing] subunit B (310 aa).

Residues 2-185 (FDAKSFIEES…LGLPEKIAHR (184 aa)) enclose the GMPS ATP-PPase domain. 29–35 (SGGVDSS) contributes to the ATP binding site.

Heterodimer composed of a glutamine amidotransferase subunit (A) and a GMP-binding subunit (B).

It carries out the reaction XMP + L-glutamine + ATP + H2O = GMP + L-glutamate + AMP + diphosphate + 2 H(+). It functions in the pathway purine metabolism; GMP biosynthesis; GMP from XMP (L-Gln route): step 1/1. Functionally, catalyzes the synthesis of GMP from XMP. This chain is GMP synthase [glutamine-hydrolyzing] subunit B, found in Methanococcus vannielii (strain ATCC 35089 / DSM 1224 / JCM 13029 / OCM 148 / SB).